The chain runs to 1271 residues: Probable WRKY transcription factor protein 1 (1271 aa).

Residues 1-12 show a composition bias toward polar residues; that stretch reads MGAQYSTELNKY. Disordered regions lie at residues 1-138, 204-312, and 370-515; these read MGAQ…NSDR, NNNN…QQNG, and NNNN…RTNS. Positions 9–71 form a coiled coil; it reads LNKYNNNNNN…NNNNNNNNNN (63 aa). Low complexity-rich tracts occupy residues 13 to 103, 116 to 135, 204 to 216, and 223 to 259; these read NNNN…NNNN, INNT…NNNN, NNNN…NENN, and SSTT…NNNN. Residues 260–274 show a composition bias toward acidic residues; sequence NEDDEDDYGDDDTIE. Residues 297-312 are compositionally biased toward polar residues; sequence SNLNDTNGGNSPQQNG. Positions 320-372 form a coiled coil; the sequence is KKLLALQQKQLEQEQEQKQQQKQQQQQQQQQQQQQQQQQQQQQKDAIENINNN. A compositionally biased stretch (low complexity) spans 370–388; sequence NNNNNNKLQPIVKNSVNKT. The segment covering 413–442 has biased composition (acidic residues); it reads NEDEYDASDEYIDDDDDDDEKYDDDDDEYF. A compositionally biased stretch (low complexity) spans 443-458; that stretch reads EGNNNNNYKKNNISNK. Over residues 475–487 the composition is skewed to basic and acidic residues; that stretch reads EIFKQKKLNHDKN. Over residues 488-515 the composition is skewed to polar residues; the sequence is QSNPKQQLTSHSEFDNSLLNKNQSRTNS. Residues 520–574 are a coiled coil; it reads LQIKEENYHQIQQEHGEKQQQQQQQQQQPQQQQQQQQQQQQQQQQEMQVDKEQTE. Residues 578–587 show a composition bias toward basic and acidic residues; it reads NTNKKEEQKP. Disordered stretches follow at residues 578 to 650 and 667 to 811; these read NTNK…EGFL and SKKS…NISN. A compositionally biased stretch (low complexity) spans 610–642; the sequence is NNENNNNNNNNNNNNNNNNNNNNNNNNNNYRNN. Positions 672–702 are enriched in polar residues; the sequence is NVVPTSPKSNLSDQQPPFSPVQISPQKQSPA. Composition is skewed to low complexity over residues 703 to 715, 725 to 766, and 774 to 811; these read TTTT…TPTP, NNNI…NNIN, and NSTQ…NISN. A coiled-coil region spans residues 766–786; the sequence is NNEEDEENNSTQNNNNNNNNN. The WRKY 1 DNA-binding region spans 808 to 872; the sequence is NISNIVSDGY…YKGEHCHGFP (65 aa). 4 residues coordinate Zn(2+): Cys839, Cys844, His867, and His869. Positions 890–1095 are disordered; it reads FEGLDGNNNN…RFNGTSESKG (206 aa). The segment covering 895-918 has biased composition (low complexity); sequence GNNNNNNNNNNNNNNYSSNSNSNG. The span at 919-937 shows a compositional bias: gly residues; the sequence is NGNGNGNGNGNGNGNGNGN. The span at 938-956 shows a compositional bias: low complexity; sequence SNGNQDQNGNSFNDQNGDS. Polar residues predominate over residues 957–966; the sequence is PTQHGQISPM. Residues 967–995 are compositionally biased toward low complexity; it reads NSPKNTIPTTTTTTTSISTYVNTNSTNKK. Residues 998–1010 show a composition bias toward basic and acidic residues; the sequence is SKQEKKISVKNET. Over residues 1011–1021 the composition is skewed to acidic residues; the sequence is TDDDEFQEDID. Residues 1013–1040 are a coiled coil; that stretch reads DDEFQEDIDQLSNNNNNNNNNNNNNNNN. Over residues 1025-1085 the composition is skewed to low complexity; that stretch reads NNNNNNNNNN…NNNNNNNNNN (61 aa). Residues 1105-1167 constitute a DNA-binding region (WRKY 2); the sequence is SSIDHLDDGF…YRGKHNHDPP (63 aa). Residues Cys1136, Cys1141, His1162, and His1164 each contribute to the Zn(2+) site. Residues 1180-1210 form a disordered region; the sequence is NGLYNNNNNNNNNNNNNNNNNNNNNNINNIN. Residues 1184-1210 show a composition bias toward low complexity; that stretch reads NNNNNNNNNNNNNNNNNNNNNNINNIN.

The protein belongs to the WRKY group I family.

The protein resides in the nucleus. Functionally, probable transcription factor. Interacts specifically with the W box (5'-(T)TGAC[CT]-3'), a frequently occurring elicitor-responsive cis-acting element. In Dictyostelium discoideum (Social amoeba), this protein is Probable WRKY transcription factor protein 1 (wrky1).